Here is a 63-residue protein sequence, read N- to C-terminus: Large ribosomal subunit protein bL35 (63 aa).

The protein belongs to the bacterial ribosomal protein bL35 family.

The chain is Large ribosomal subunit protein bL35 from Campylobacter concisus (strain 13826).